The chain runs to 157 residues: Protein Smg (157 aa).

This sequence belongs to the Smg family.

This Escherichia coli O139:H28 (strain E24377A / ETEC) protein is Protein Smg.